The chain runs to 1271 residues: SR-related and CTD-associated factor 8 (1271 aa).

Residues 1-139 enclose the CID domain; the sequence is MEAVKTFNSE…PLLDMAAGIP (139 aa). Phosphothreonine is present on Thr-6. Residue Lys-18 forms a Glycyl lysine isopeptide (Lys-Gly) (interchain with G-Cter in SUMO1) linkage. Residues 270–283 are compositionally biased toward basic and acidic residues; the sequence is GEDSEHSEEPKKEI. Disordered regions lie at residues 270–289, 322–354, and 384–468; these read GEDS…SQLS, QQQP…SQQH, and EEVF…PPIR. Position 273 is a phosphoserine (Ser-273). Polar residues predominate over residues 327–354; the sequence is KATPQDSQEGTFGSEHSASPSQGSSQQH. A compositionally biased stretch (basic residues) spans 394–443; sequence VAVRSRSRTHSRSRSRSPRKRRSRSRSGSRKRKHRKRSRSRSRERKRKSS. Residues 447–461 show a composition bias toward basic and acidic residues; it reads SSERRAREREKERQK. The RRM domain maps to 477–551; sequence TTLWVGQVDK…KVIKIAWALN (75 aa). Thr-615 carries the phosphothreonine modification. A phosphoserine mark is found at Ser-617 and Ser-779. The tract at residues 899–918 is disordered; sequence TQPPAGPQNLPPLSIPNQRM. Residues 902–912 show a composition bias toward pro residues; that stretch reads PAGPQNLPPLS. Asymmetric dimethylarginine occurs at positions 917, 927, and 938. Pro residues-rich tracts occupy residues 945 to 956 and 963 to 972; these read GIPPQRGIPPPS and HPPPRGPFPP. The disordered stretch occupies residues 945 to 1064; that stretch reads GIPPQRGIPP…DGRDHFGRPP (120 aa). Composition is skewed to basic and acidic residues over residues 1011 to 1027 and 1034 to 1064; these read EGDR…RESI and DVRD…GRPP. Asymmetric dimethylarginine is present on Arg-1073. Residues 1198–1271 form a disordered region; it reads YFEGATSQRK…VVESTETEGT (74 aa). Residues 1255-1271 show a composition bias toward acidic residues; it reads ADIESEPVVESTETEGT.

In terms of assembly, interacts with POLR2A; via C-terminal heptapeptide repeat domain (CTD) phosphorylated at 'Ser-2' and 'Ser-5'. Identified in a complex with CDC5L and other spliceosomal proteins.

The protein resides in the nucleus. It is found in the nucleus matrix. In terms of biological role, anti-terminator protein required to prevent early mRNA termination during transcription. Together with SCAF4, acts by suppressing the use of early, alternative poly(A) sites, thereby preventing the accumulation of non-functional truncated proteins. Mechanistically, associates with the phosphorylated C-terminal heptapeptide repeat domain (CTD) of the largest RNA polymerase II subunit (POLR2A), and subsequently binds nascent RNA upstream of early polyadenylation sites to prevent premature mRNA transcript cleavage and polyadenylation. Independently of SCAF4, also acts as a positive regulator of transcript elongation. The protein is SR-related and CTD-associated factor 8 of Homo sapiens (Human).